We begin with the raw amino-acid sequence, 157 residues long: Ubiquitin-like protein 4A (157 aa).

The region spanning methionine 1–lysine 76 is the Ubiquitin-like domain. A Glycyl lysine isopeptide (Lys-Gly) (interchain with G-Cter in ubiquitin) cross-link involves residue lysine 48. Phosphoserine is present on serine 90. The tract at residues tryptophan 96–leucine 138 is required and sufficient for interaction with BAG6.

In terms of assembly, component of the BAG6/BAT3 complex, at least composed of BAG6, UBL4A and GET4/TRC35. Interacts with BAG6; the interaction is direct and required for UBL4A protein stability. Interacts with USP13; may be indirect via BAG6. Post-translationally, polyubiquitinated. Ubiquitination by AMFR and deubiquitination by USP13 may regulate the interaction between the BAG6/BAT3 complex and SGTA and therefore may regulate client proteins fate.

It is found in the cytoplasm. Its subcellular location is the cytosol. The protein localises to the nucleus. Functionally, as part of a cytosolic protein quality control complex, the BAG6/BAT3 complex, maintains misfolded and hydrophobic patches-containing proteins in a soluble state and participates in their proper delivery to the endoplasmic reticulum or alternatively can promote their sorting to the proteasome where they undergo degradation. The BAG6/BAT3 complex is involved in the post-translational delivery of tail-anchored/type II transmembrane proteins to the endoplasmic reticulum membrane. Recruited to ribosomes, it interacts with the transmembrane region of newly synthesized tail-anchored proteins and together with SGTA and ASNA1 mediates their delivery to the endoplasmic reticulum. Client proteins that cannot be properly delivered to the endoplasmic reticulum are ubiquitinated and sorted to the proteasome. Similarly, the BAG6/BAT3 complex also functions as a sorting platform for proteins of the secretory pathway that are mislocalized to the cytosol either delivering them to the proteasome for degradation or to the endoplasmic reticulum. The BAG6/BAT3 complex also plays a role in the endoplasmic reticulum-associated degradation (ERAD), a quality control mechanism that eliminates unwanted proteins of the endoplasmic reticulum through their retrotranslocation to the cytosol and their targeting to the proteasome. It maintains these retrotranslocated proteins in an unfolded yet soluble state condition in the cytosol to ensure their proper delivery to the proteasome. This chain is Ubiquitin-like protein 4A, found in Mus musculus (Mouse).